A 274-amino-acid chain; its full sequence is Pantothenate synthetase (274 aa).

Residue 27 to 34 participates in ATP binding; that stretch reads MGALHKGH. Residue histidine 34 is the Proton donor of the active site. Glutamine 58 serves as a coordination point for (R)-pantoate. Glutamine 58 contacts beta-alanine. 145-148 is an ATP binding site; sequence GQKD. Glutamine 151 contributes to the (R)-pantoate binding site. 182-185 is a binding site for ATP; sequence LSSR.

The protein belongs to the pantothenate synthetase family. As to quaternary structure, homodimer.

The protein localises to the cytoplasm. It carries out the reaction (R)-pantoate + beta-alanine + ATP = (R)-pantothenate + AMP + diphosphate + H(+). Its pathway is cofactor biosynthesis; (R)-pantothenate biosynthesis; (R)-pantothenate from (R)-pantoate and beta-alanine: step 1/1. In terms of biological role, catalyzes the condensation of pantoate with beta-alanine in an ATP-dependent reaction via a pantoyl-adenylate intermediate. The chain is Pantothenate synthetase from Wolinella succinogenes (strain ATCC 29543 / DSM 1740 / CCUG 13145 / JCM 31913 / LMG 7466 / NCTC 11488 / FDC 602W) (Vibrio succinogenes).